The following is a 277-amino-acid chain: Ribosomal RNA small subunit methyltransferase A (277 aa).

6 residues coordinate S-adenosyl-L-methionine: asparagine 24, leucine 26, glycine 51, glutamate 72, aspartate 96, and asparagine 123.

This sequence belongs to the class I-like SAM-binding methyltransferase superfamily. rRNA adenine N(6)-methyltransferase family. RsmA subfamily.

The protein resides in the cytoplasm. The enzyme catalyses adenosine(1518)/adenosine(1519) in 16S rRNA + 4 S-adenosyl-L-methionine = N(6)-dimethyladenosine(1518)/N(6)-dimethyladenosine(1519) in 16S rRNA + 4 S-adenosyl-L-homocysteine + 4 H(+). Specifically dimethylates two adjacent adenosines (A1518 and A1519) in the loop of a conserved hairpin near the 3'-end of 16S rRNA in the 30S particle. May play a critical role in biogenesis of 30S subunits. The protein is Ribosomal RNA small subunit methyltransferase A of Ureaplasma parvum serovar 3 (strain ATCC 27815 / 27 / NCTC 11736).